Consider the following 362-residue polypeptide: Outer envelope protein 39, chloroplastic (362 aa).

It belongs to the OEP80 (TC 1.B.33.2) family. In terms of tissue distribution, expressed in germinating seeds. Expressed in the vasculature of roots, cotyledons and leaves.

Its subcellular location is the plastid. It localises to the chloroplast outer membrane. Functionally, beta-barrel pore-forming protein which possesses voltage-dependent channel activity. Required for proper plastid development. Involved in the maintenance of metabolic homeostasis of full-grown plants. The chain is Outer envelope protein 39, chloroplastic from Arabidopsis thaliana (Mouse-ear cress).